A 439-amino-acid polypeptide reads, in one-letter code: Xylose isomerase (439 aa).

Residues His-101 and Asp-104 contribute to the active site. Mg(2+) is bound by residues Glu-232, Glu-268, His-271, Asp-296, Asp-307, Asp-309, and Asp-339.

This sequence belongs to the xylose isomerase family. Homotetramer. It depends on Mg(2+) as a cofactor.

The protein resides in the cytoplasm. The catalysed reaction is alpha-D-xylose = alpha-D-xylulofuranose. This is Xylose isomerase from Haemophilus influenzae (strain PittEE).